A 286-amino-acid chain; its full sequence is Transcription factor egl-46 (286 aa).

The C2H2-type 1; atypical zinc finger occupies 180–200 (CICRLCKVKYEDVFKLAQHKC). C2H2-type zinc fingers lie at residues 208–230 (YKCP…RRWH) and 248–271 (VSCS…STCQ).

Belongs to the INSM1 family. Interacts (via C-terminus) with egl-44 (via N-terminus); the interaction is direct; the interaction may regulate transcription. As to expression, expressed in touch cells, HSN cells, ventral cord motor neurons and ciliated ray neurons.

The protein resides in the nucleus. Functionally, transcription factor. Represses expression of genes involved in differentiation of touch receptor neurons (TRN), probably acting as a heterodimer with egl-44, perhaps by occupying similar cis-regulatory elements as an unc-86/mec-3 heterodimer. Plays a role in cell fate specification of neurons, including the hook neuron HOB, the gas-sensing neuron BAG and touch receptor neurons. Plays a role in neuron differentiation by repressing the expression of zag-1 in FLP neurons, probably acting as a heterodimer with egl-44; because zag-1 represses expression of egl-46 and egl-44, together these proteins form a bistable, negative-feedback loop that regulates the choice between neuronal fates. Acts downstream of egl-44 to prevent touch cell differentiation in FLP neurons. Involved in male mating behavior, acting in concert with egl-44, via modulation of expression of polycystins lov-1 and pkd-2, homeodomain protein ceh-26, and neuropeptide-like protein nlp-8. Modulates the expression of a subset of terminal differentiation genes involved in O(2)- and CO(2)-sensing, acting in parallel to ets-5 and egl-13. May act upstream of RFX transcription factor daf-19 to regulate gene expression specifically in the HOB neuron. Plays a role in specifying commissural dendrites of the PVD nociceptive neurons, acting in concert with egl-44. In association with egl-44, regulates cell cycle exit in the neuronal Q cell lineage. This is Transcription factor egl-46 from Caenorhabditis elegans.